We begin with the raw amino-acid sequence, 526 residues long: Cytochrome P450 monooxygenase COX2 (526 aa).

The N-linked (GlcNAc...) asparagine glycan is linked to Asn-11. The chain crosses the membrane as a helical span at residues 12–31; sequence ITTNHVAAAVCAGIAVYAIV. An N-linked (GlcNAc...) asparagine glycan is attached at Asn-302. Cys-450 lines the heme pocket.

It belongs to the cytochrome P450 family. Requires heme as cofactor.

Its subcellular location is the membrane. The protein operates within secondary metabolite biosynthesis. In terms of biological role, cytochrome P450 monooxygenase; part of the gene cluster that mediates the biosynthesis of alpha-cuprenene and oxidized derivatives. The alpha-cuprenene synthase COP6 is the only sesquiterpene synthase identified in C.cinereus that appears to be part of a biosynthetic gene cluster and is highly specific since it catalyzes the cyclization of (2E,6E)-farnesyl diphosphate into only one product, alpha-cuprenene. The cytochrome P450 monooxygenase COX2 then oxidizes the cyclohexadiene ring of alpha-cuprenene at positions 1 and 4, yielding first alpha-cuparene, followed by alpha-cuparophenol and a further yet unidentified compound resulting from one additional oxidation step. The cytochrome P450 monooxygenase COX1 then likely catalyzes the oxidation at position 9 of the pentane ring of alpha-cuprenene to give the corresponding hydroxy or ketone derivatives. The protein is Cytochrome P450 monooxygenase COX2 of Coprinopsis cinerea (strain Okayama-7 / 130 / ATCC MYA-4618 / FGSC 9003) (Inky cap fungus).